The chain runs to 56 residues: UPF0434 protein CbuG_1535 (56 aa).

The protein belongs to the UPF0434 family.

The sequence is that of UPF0434 protein CbuG_1535 from Coxiella burnetii (strain CbuG_Q212) (Coxiella burnetii (strain Q212)).